A 262-amino-acid polypeptide reads, in one-letter code: LysM and putative peptidoglycan-binding domain-containing protein 3 (262 aa).

Residues 1-218 (MSGRIPNHGY…PYHGADWSLG (218 aa)) lie on the Extracellular side of the membrane. A LysM domain is found at 70 to 114 (ISRDICEGDTLNSIALQYCCTVADLKRANNFLNEQDFFALRTIKI). Residues 219–239 (WWTAVAIMVFVGIITPLFYFL) form a helical membrane-spanning segment. Over 240-262 (YYEVLMKVNTSHTLNSIEKSGPS) the chain is Cytoplasmic.

It is found in the cell membrane. It localises to the golgi apparatus. Its function is as follows. Essential for Golgi structural integrity. The protein is LysM and putative peptidoglycan-binding domain-containing protein 3 (lysmd3) of Xenopus tropicalis (Western clawed frog).